The following is a 261-amino-acid chain: Ribosomal RNA large subunit methyltransferase E (261 aa).

5 residues coordinate S-adenosyl-L-methionine: Gly-81, Trp-83, Asp-104, Asp-120, and Asp-144. The Proton acceptor role is filled by Lys-184. Residues 233-261 (GNALGHEVEDDGPMPHDPREDATADEDQD) are disordered. Basic and acidic residues predominate over residues 245 to 254 (PMPHDPREDA).

Belongs to the class I-like SAM-binding methyltransferase superfamily. RNA methyltransferase RlmE family.

It localises to the cytoplasm. It carries out the reaction uridine(2552) in 23S rRNA + S-adenosyl-L-methionine = 2'-O-methyluridine(2552) in 23S rRNA + S-adenosyl-L-homocysteine + H(+). Functionally, specifically methylates the uridine in position 2552 of 23S rRNA at the 2'-O position of the ribose in the fully assembled 50S ribosomal subunit. The protein is Ribosomal RNA large subunit methyltransferase E of Allorhizobium ampelinum (strain ATCC BAA-846 / DSM 112012 / S4) (Agrobacterium vitis (strain S4)).